The following is a 244-amino-acid chain: Probable transcriptional regulatory protein TT_C0469 (244 aa).

Belongs to the TACO1 family.

Its subcellular location is the cytoplasm. The sequence is that of Probable transcriptional regulatory protein TT_C0469 from Thermus thermophilus (strain ATCC BAA-163 / DSM 7039 / HB27).